The primary structure comprises 40 residues: Omega-conotoxin RsXXVIA (40 aa).

Contains 4 disulfide bonds. Expressed by the venom duct.

It localises to the secreted. Functionally, omega-conotoxins act at presynaptic membranes, they bind and block voltage-gated calcium channels (Cav). This toxin inhibits rat Cav2.2/CACNA1B calcium channels in a dose-dependent manner (EC(50)=2.8 uM), whose effect is partially reversed after washing. In vivo, when injected into mice, it shows both an analgesic effect in acute thermal pain at 30 and 45 minutes post-injection and an anti-nociceptive effect in a formalin chronic pain test. This is Omega-conotoxin RsXXVIA from Conus regularis (Regular cone).